We begin with the raw amino-acid sequence, 259 residues long: Phosphoribosylaminoimidazole-succinocarboxamide synthase (259 aa).

The protein belongs to the SAICAR synthetase family.

It carries out the reaction 5-amino-1-(5-phospho-D-ribosyl)imidazole-4-carboxylate + L-aspartate + ATP = (2S)-2-[5-amino-1-(5-phospho-beta-D-ribosyl)imidazole-4-carboxamido]succinate + ADP + phosphate + 2 H(+). It functions in the pathway purine metabolism; IMP biosynthesis via de novo pathway; 5-amino-1-(5-phospho-D-ribosyl)imidazole-4-carboxamide from 5-amino-1-(5-phospho-D-ribosyl)imidazole-4-carboxylate: step 1/2. The protein is Phosphoribosylaminoimidazole-succinocarboxamide synthase of Zymomonas mobilis subsp. mobilis (strain ATCC 31821 / ZM4 / CP4).